A 1436-amino-acid chain; its full sequence is ABC transporter C family member 15 (1436 aa).

7 helical membrane-spanning segments follow: residues 8 to 28, 129 to 149, 165 to 185, 238 to 258, 261 to 281, 349 to 369, and 373 to 393; these read IINK…IYLY, YIAT…PLIL, IYIG…NMAS, FFQY…IQIL, LGFL…VMLI, IIYW…VLVS, and TYTL…ITIL. One can recognise an ABC transmembrane type-1 1 domain in the interval 128-412; it reads NYIATGLFVF…LPDCLHKFIS (285 aa). The region spanning 543–766 is the ABC transporter 1 domain; that stretch reads ADYQDLLSIN…IDFEMILKEK (224 aa). Position 575 to 582 (575 to 582) interacts with ATP; sequence GGVRSGKT. Residues 865 to 1155 enclose the ABC transmembrane type-1 2 domain; that stretch reads KKYIRMGSSI…FMRQFGELES (291 aa). 6 helical membrane passes run 873–893, 919–939, 985–1005, 1017–1039, 1101–1121, and 1127–1147; these read SISF…ILLL, LIYL…YLLI, IDIL…CLVT, IAIP…NYSV, IGIR…LFSI, and GLSA…NWFM. Residues 1193–1426 form the ABC transporter 2 domain; that stretch reads IEFKNVEIRY…STSRFSKLIK (234 aa). ATP is bound at residue 1227–1234; that stretch reads GRSGSGKS.

This sequence belongs to the ABC transporter superfamily. ABCC family. Conjugate transporter (TC 3.A.1.208) subfamily.

It localises to the membrane. In Dictyostelium discoideum (Social amoeba), this protein is ABC transporter C family member 15 (abcC15).